A 424-amino-acid polypeptide reads, in one-letter code: Tubulin-specific chaperone cofactor E-like protein (424 aa).

2 positions are modified to phosphoserine: Ser-18 and Ser-41. LRR repeat units follow at residues 73–98 (CAHVSELDLSDNKLEDWHEVSKIVSN), 99–123 (VPQLEFLNLSSNPLNLSVLERTCAG), 124–147 (SFSGVRKLVLNNSKASWETVHMIL), 150–172 (LPDLEELFLCLNDYETVSCPSIC), 173–197 (CHSLKLLHITDNNLQDWTEIRKLGV), 199–224 (FPSLDTLVLANNHLNAIEEPDDSLAR), and 226–250 (FPNLRSISLHKSGLQSWEDIDKLNS). Residues 262 to 303 (IPLLQPYTTEERRKLVIARLPSVSKLNGSVVTDGEREDSERF) enclose the LRRCT domain. Residues 334–424 (AEVDLRPQSS…DKIYVESKTK (91 aa)) form the Ubiquitin-like domain. Positions 349-375 (HFNDQVEEMSIRLDQTVAELKKQLKTL) form a coiled coil.

Abundantly expressed in testis, but is also present in several tissues at a much lower level.

Its subcellular location is the cytoplasm. The protein resides in the cytoskeleton. Its function is as follows. Acts as a regulator of tubulin stability. This is Tubulin-specific chaperone cofactor E-like protein (TBCEL) from Homo sapiens (Human).